We begin with the raw amino-acid sequence, 527 residues long: Cytochrome P450 monooygenase 3 (527 aa).

The chain crosses the membrane as a helical span at residues 21–41; sequence IAVAFAALCGATGLLAFSWWI. C473 is a heme binding site.

Belongs to the cytochrome P450 family. Requires heme as cofactor.

It is found in the membrane. The protein operates within plant hormone biosynthesis; gibberellin biosynthesis. Functionally, gibberellin 13-hydroxylase; part of the gene cluster that mediates the biosynthesis of gibberellins (GAs), diterpenoids that may provide a selective advantage during infection of the preferred host plant, rice. Gibberellins (GAs) are diterpenoids and are synthesized via the mevalonate pathway. Biosynthesis of the major metabolite GA3 (gibberellic acid) from geranylgeranyl diphosphate (GGPP) requires 13 steps. The GGPP produced by the geranylgeranyl diphosphate synthase GGS2 is converted to ent-kaurene via ent-copalyldiphosphate in a two-step cyclization reaction performed by the bifunctional ent-copalyl diphosphate synthase/ent-kaurene synthase enzyme (CPS/KS). Ent-Kaurene is metabolized to GAs by a series of oxidation reactions catalyzed by cytochrome P450 monooxygenases. Cytochrome P450 monooxygenase P450-4 is an ent-kaurene oxidase that catalyzes the three oxidation steps between ent-kaurene and ent-kaurenoic acid. The highly multifunctional cytochrome P450 monooxygenase P450-1 then catalyzes four steps involving oxidation at two carbon atoms, in the main pathway from ent-kaurenoic acid to GA14 via GA12-aldehyde as well as producing kaurenolides and fujenoic acids as by-products. The cytochrome P450 monooxygenase P450-2 then converts GA14 to GA4 by removal of C-20. GA4 is further converted to GA7 by the GA4 desaturase DES via 1,2-desaturation before cytochrome P450 monooxygenase P450-3, a 13-hydroxylase, hydroxylates GA7 to GA3, the final product of the GA-biosynthetic pathway. The chain is Cytochrome P450 monooygenase 3 from Gibberella fujikuroi (strain CBS 195.34 / IMI 58289 / NRRL A-6831) (Bakanae and foot rot disease fungus).